We begin with the raw amino-acid sequence, 399 residues long: P2X purinoceptor 1 (399 aa).

The Cytoplasmic segment spans residues 1-28 (MARRLQDELSAFFFEYDTPRMVLVRNKK). The helical transmembrane segment at 29–50 (VGVIFRLIQLVVLVYVIGWVFV) threads the bilayer. Residues 51–338 (YEKGYQTSSG…IPTMTTIGSG (288 aa)) are Extracellular-facing. The CTP site is built by Lys-68, Lys-70, and Lys-140. An ATP-binding site is contributed by Lys-70. Disulfide bonds link Cys-117/Cys-165, Cys-126/Cys-149, and Cys-132/Cys-159. N-linked (GlcNAc...) asparagine glycans are attached at residues Asn-153 and Asn-184. Thr-186 contributes to the CTP binding site. Thr-186 contributes to the ATP binding site. Asn-210 carries N-linked (GlcNAc...) asparagine glycosylation. 2 cysteine pairs are disulfide-bonded: Cys-217–Cys-227 and Cys-261–Cys-270. The ATP site is built by Ser-286, Asn-290, and Arg-292. 2 residues coordinate CTP: Asn-290 and Arg-292. Asn-300 carries an N-linked (GlcNAc...) asparagine glycan. A CTP-binding site is contributed by Lys-309. Lys-309 lines the ATP pocket. The pore-forming motif stretch occupies residues 331-338 (TMTTIGSG). The helical transmembrane segment at 339–358 (IGIFGVATVLCDLLLLHILP) threads the bilayer. The Cytoplasmic portion of the chain corresponds to 359 to 399 (KRHYYKQKKFKYAEDMGPGEGERDPAATSSTLGLQENMRTS). Positions 374–399 (MGPGEGERDPAATSSTLGLQENMRTS) are disordered. Over residues 385-399 (ATSSTLGLQENMRTS) the composition is skewed to polar residues. 2 positions are modified to phosphoserine: Ser-387 and Ser-388. A Phosphothreonine modification is found at Thr-389.

It belongs to the P2X receptor family. In terms of assembly, functional P2XRs are organized as homomeric and heteromeric trimers. Forms heterodimer with P2RX2. Forms heterodimer with P2RX4. Forms heterodimer with P2RX5. In terms of tissue distribution, expressed in smooth muscle of the bladder and arteries.

The protein localises to the cell membrane. It carries out the reaction Ca(2+)(in) = Ca(2+)(out). The enzyme catalyses K(+)(in) = K(+)(out). It catalyses the reaction Na(+)(in) = Na(+)(out). With respect to regulation, activated by low concentrations of ATP (&lt;1 uM). Undergoes rapid desensitisation. Sensitives to the ATP agonist:alpha/beta-methylene-ATP. Modulated by cholesterol. In terms of biological role, ATP-gated nonselective transmembrane cation channel permeable to potassium, sodium and with relatively high calcium permeability. Furthermore, CTP functions as a weak affinity agonist for P2RX1. Plays a role in male fertility, bladder contraction and platelet aggregation. Specifically, plays an important role in neurogenic contraction of smooth muscle of the vas deferens, and therefore is essential for normal male reproductive function. In addition, contributes to smooth muscle contractions of the urinary bladder. On platelets, contributes to platelet activation and aggregation and thereby, also to thrombosis. On neutrophils, it is involved in chemotaxis and in mitigating the activation of circulating cells. This Mus musculus (Mouse) protein is P2X purinoceptor 1 (P2rx1).